We begin with the raw amino-acid sequence, 433 residues long: SPI-2 type 3 secretion system ATPase (433 aa).

Gly165–Thr170 provides a ligand contact to ATP.

The protein belongs to the ATPase alpha/beta chains family. T3SS ATPase subfamily. The core secretion machinery of the T3SS is composed of approximately 20 different proteins, including cytoplasmic components, a base, an export apparatus and a needle. This subunit is part of the cytosolic complex. Forms homohexamers. Forms a complex with SsaK/SctL (stator protein) and SsaQ/SctQ (the major sorting platform component). Interacts with the T3SS-2 specific chaperones SsaE, SseA, SscA, SscB, and SrcA.

It is found in the cytoplasm. The catalysed reaction is ATP + H2O + cellular proteinSide 1 = ADP + phosphate + cellular proteinSide 2.. Its function is as follows. ATPase component of the type III secretion system (T3SS), also called injectisome, which is used to inject bacterial effector proteins into eukaryotic host cells. Acts as a molecular motor to provide the energy that is required for the export of proteins. Required for type III secretion apparatus (T3SA) formation, secretion of a subset of SPI-2 effectors and virulence. May play a critical role in T3SS substrate recognition, disassembly of the effector/chaperone complex and unfolding of the effector in an ATP-dependent manner prior to secretion. Releases the effector protein SseB from the T3SS-2 specific chaperone SsaE in an ATP-dependent manner. The protein is SPI-2 type 3 secretion system ATPase of Salmonella typhimurium (strain LT2 / SGSC1412 / ATCC 700720).